The sequence spans 144 residues: MVASMATTYELRIYGNVECAEFIDKVESLGKLLDVNGVVYVYKDSVRILANFPNEKKRQLFKEIIKDLEDDGGLIKVERIEERDLNTYIEFPNGLNKISTNELKEINKKLDKTISYLENIFNALEKQIKVSEEIRDILKDTFEV.

The region spanning Thr8–Thr100 is the Acylphosphatase-like domain.

The protein is Acylphosphatase-like protein MJ1331 of Methanocaldococcus jannaschii (strain ATCC 43067 / DSM 2661 / JAL-1 / JCM 10045 / NBRC 100440) (Methanococcus jannaschii).